The chain runs to 61 residues: Insect toxin BsIT1 (61 aa).

Residues 1–61 (DGYILMRNGC…KHLNYHKKTC (61 aa)) form the LCN-type CS-alpha/beta domain. 4 disulfides stabilise this stretch: C10-C61, C14-C35, C21-C42, and C25-C44.

The protein belongs to the long (4 C-C) scorpion toxin superfamily. Sodium channel inhibitor family. Beta subfamily. Expressed by the venom gland.

The protein localises to the secreted. Its function is as follows. Depressant insect beta-toxins cause a transient contraction paralysis followed by a slow flaccid paralysis. They bind voltage-independently at site-4 of sodium channels (Nav) and shift the voltage of activation toward more negative potentials thereby affecting sodium channel activation and promoting spontaneous and repetitive firing. This toxin is active only on insects and causes a transient contraction paralysis followed by a slow flaccid paralysis. The protein is Insect toxin BsIT1 of Hottentotta tamulus sindicus (Scorpion).